The sequence spans 669 residues: L-type lectin-domain containing receptor kinase IV.4 (669 aa).

The signal sequence occupies residues 1 to 23 (MFFIKLFTIFFLSFFWQSLKSSS). Over 24–294 (QIIDFTYNGF…TRVYRFYKNW (271 aa)) the chain is Extracellular. The interval 26-260 (IDFTYNGFRP…SEIFVLGWSF (235 aa)) is legume-lectin like. N-linked (GlcNAc...) asparagine glycosylation is found at asparagine 58, asparagine 80, asparagine 127, asparagine 152, and asparagine 185. Residues 295-315 (VPLISLLLIPFLLIIFLVRFI) traverse the membrane as a helical segment. Residues 316-669 (MKRRRKFAEE…VAYSLLSSGR (354 aa)) are Cytoplasmic-facing. In terms of domain architecture, Protein kinase spans 350-627 (FKDKNILGSG…LQYLRGDAML (278 aa)). Residues 356–364 (LGSGGFGSV) and lysine 379 contribute to the ATP site. Aspartate 475 acts as the Proton acceptor in catalysis.

In the C-terminal section; belongs to the protein kinase superfamily. Ser/Thr protein kinase family. The protein in the N-terminal section; belongs to the leguminous lectin family.

It localises to the cell membrane. It catalyses the reaction L-seryl-[protein] + ATP = O-phospho-L-seryl-[protein] + ADP + H(+). It carries out the reaction L-threonyl-[protein] + ATP = O-phospho-L-threonyl-[protein] + ADP + H(+). Its function is as follows. Involved in resistance response to the pathogenic oomycetes Phytophthora infestans and Phytophthora capsici and to the pathogenic bacteria Pseudomonas syringae. This is L-type lectin-domain containing receptor kinase IV.4 from Arabidopsis thaliana (Mouse-ear cress).